We begin with the raw amino-acid sequence, 946 residues long: Bifunctional glutamine synthetase adenylyltransferase/adenylyl-removing enzyme (946 aa).

Residues 1 to 440 are adenylyl removase; sequence MKPLSSPLQQ…VFNELIGDDE (440 aa). Residues 449–946 are adenylyl transferase; the sequence is SEQWRELWQD…ASWQKWLVEE (498 aa).

The protein belongs to the GlnE family. Mg(2+) serves as cofactor.

It carries out the reaction [glutamine synthetase]-O(4)-(5'-adenylyl)-L-tyrosine + phosphate = [glutamine synthetase]-L-tyrosine + ADP. The catalysed reaction is [glutamine synthetase]-L-tyrosine + ATP = [glutamine synthetase]-O(4)-(5'-adenylyl)-L-tyrosine + diphosphate. Involved in the regulation of glutamine synthetase GlnA, a key enzyme in the process to assimilate ammonia. When cellular nitrogen levels are high, the C-terminal adenylyl transferase (AT) inactivates GlnA by covalent transfer of an adenylyl group from ATP to specific tyrosine residue of GlnA, thus reducing its activity. Conversely, when nitrogen levels are low, the N-terminal adenylyl removase (AR) activates GlnA by removing the adenylyl group by phosphorolysis, increasing its activity. The regulatory region of GlnE binds the signal transduction protein PII (GlnB) which indicates the nitrogen status of the cell. The chain is Bifunctional glutamine synthetase adenylyltransferase/adenylyl-removing enzyme from Escherichia coli O45:K1 (strain S88 / ExPEC).